The primary structure comprises 521 residues: Ribonuclease Y (521 aa).

The chain crosses the membrane as a helical span at residues 3-23 (VSIWMLVITVLAAVAAYFAGS). The 61-residue stretch at 211-271 (TVSVVPLPSD…VRREVARMSL (61 aa)) folds into the KH domain. Residues 337-430 (IYQHSLEVAF…VQAADALSGA (94 aa)) form the HD domain.

The protein belongs to the RNase Y family.

The protein localises to the cell membrane. Endoribonuclease that initiates mRNA decay. This chain is Ribonuclease Y, found in Pelobacter propionicus (strain DSM 2379 / NBRC 103807 / OttBd1).